Reading from the N-terminus, the 31-residue chain is Cytochrome b6-f complex subunit 6 (31 aa).

The helical transmembrane segment at 4-24 threads the bilayer; it reads LTSYFGFLLAALTITLALFIG.

Belongs to the PetL family. In terms of assembly, the 4 large subunits of the cytochrome b6-f complex are cytochrome b6, subunit IV (17 kDa polypeptide, PetD), cytochrome f and the Rieske protein, while the 4 small subunits are PetG, PetL, PetM and PetN. The complex functions as a dimer.

It is found in the plastid. Its subcellular location is the chloroplast thylakoid membrane. Component of the cytochrome b6-f complex, which mediates electron transfer between photosystem II (PSII) and photosystem I (PSI), cyclic electron flow around PSI, and state transitions. PetL is important for photoautotrophic growth as well as for electron transfer efficiency and stability of the cytochrome b6-f complex. The polypeptide is Cytochrome b6-f complex subunit 6 (Triticum aestivum (Wheat)).